A 160-amino-acid chain; its full sequence is MTKEVIVESFELDHTIVKAPYVRLISEEFGPKGDRITNFDVRLVQPNQNSIETAGLHTIEHLLAKLIRQRIDGMIDCSPFGCRTGFHLIMWGKHSSTDIAKVIKSSLEEIATGITWEDVPGTTIESCGNYKDHSLFAAKEWAQLIIDQGISDDPFSRHVI.

Residues histidine 57, histidine 61, and cysteine 127 each coordinate Fe cation.

The protein belongs to the LuxS family. As to quaternary structure, homodimer. It depends on Fe cation as a cofactor.

The enzyme catalyses S-(5-deoxy-D-ribos-5-yl)-L-homocysteine = (S)-4,5-dihydroxypentane-2,3-dione + L-homocysteine. Functionally, involved in the synthesis of autoinducer 2 (AI-2) which is secreted by bacteria and is used to communicate both the cell density and the metabolic potential of the environment. The regulation of gene expression in response to changes in cell density is called quorum sensing. Catalyzes the transformation of S-ribosylhomocysteine (RHC) to homocysteine (HC) and 4,5-dihydroxy-2,3-pentadione (DPD). The chain is S-ribosylhomocysteine lyase from Streptococcus pyogenes serotype M2 (strain MGAS10270).